The primary structure comprises 500 residues: Cholesterol 24-hydroxylase (500 aa).

Residues 3–23 (PGLLLLGSAVLLAFGLCCTFV) form a helical membrane-spanning segment. Residue C437 coordinates heme.

This sequence belongs to the cytochrome P450 family. It depends on heme as a cofactor. As to expression, expressed in brain. The mRNA was broadly distributed with higher levels in gray matter zones and lower levels in regions rich in white matter. Not detected in fetal sample but its expression increases linearly with age.

Its subcellular location is the endoplasmic reticulum membrane. It localises to the microsome membrane. The protein localises to the postsynapse. The protein resides in the presynapse. It is found in the cell projection. Its subcellular location is the dendrite. The enzyme catalyses cholesterol + reduced [NADPH--hemoprotein reductase] + O2 = (24S)-hydroxycholesterol + oxidized [NADPH--hemoprotein reductase] + H2O + H(+). It carries out the reaction cholestanol + reduced [NADPH--hemoprotein reductase] + O2 = (24S)-hydroxycholestanol + oxidized [NADPH--hemoprotein reductase] + H2O + H(+). It catalyses the reaction 7-dehydrocholesterol + reduced [NADPH--hemoprotein reductase] + O2 = cholesta-5,7-dien-3beta,24S-diol + oxidized [NADPH--hemoprotein reductase] + H2O + H(+). The catalysed reaction is 7-dehydrocholesterol + reduced [NADPH--hemoprotein reductase] + O2 = cholesta-5,7-dien-3beta,25-diol + oxidized [NADPH--hemoprotein reductase] + H2O + H(+). The enzyme catalyses desmosterol + reduced [NADPH--hemoprotein reductase] + O2 = (24Z),26-hydroxydesmosterol + oxidized [NADPH--hemoprotein reductase] + H2O + H(+). It carries out the reaction desmosterol + reduced [NADPH--hemoprotein reductase] + O2 = (24S)-25-epoxycholesterol + oxidized [NADPH--hemoprotein reductase] + H2O + H(+). It catalyses the reaction 4beta-hydroxycholesterol + reduced [NADPH--hemoprotein reductase] + O2 = 4beta,24S-dihydroxycholesterol + oxidized [NADPH--hemoprotein reductase] + H2O + H(+). The catalysed reaction is (24S)-hydroxycholesterol + reduced [NADPH--hemoprotein reductase] + O2 = (24S,25R)-24,26-dihydroxycholesterol + oxidized [NADPH--hemoprotein reductase] + H2O + H(+). The enzyme catalyses (24S)-hydroxycholesterol + reduced [NADPH--hemoprotein reductase] + O2 = 24S,25-dihydroxycholesterol + oxidized [NADPH--hemoprotein reductase] + H2O + H(+). It carries out the reaction 7alpha-hydroxycholesterol + reduced [NADPH--hemoprotein reductase] + O2 = (24S)-7alpha-dihydroxycholesterol + oxidized [NADPH--hemoprotein reductase] + H2O + H(+). It catalyses the reaction progesterone + reduced [NADPH--hemoprotein reductase] + O2 = 17alpha-hydroxyprogesterone + oxidized [NADPH--hemoprotein reductase] + H2O + H(+). The catalysed reaction is testosterone + reduced [NADPH--hemoprotein reductase] + O2 = 16beta,17beta-dihydroxyandrost-4-en-3-one + oxidized [NADPH--hemoprotein reductase] + H2O + H(+). The enzyme catalyses testosterone + reduced [NADPH--hemoprotein reductase] + O2 = 2-hydroxytestosterone + oxidized [NADPH--hemoprotein reductase] + H2O + H(+). It carries out the reaction testosterone + reduced [NADPH--hemoprotein reductase] + O2 = 6beta,17beta-dihydroxyandrost-4-en-3-one + oxidized [NADPH--hemoprotein reductase] + H2O + H(+). It functions in the pathway steroid metabolism; cholesterol degradation. It participates in lipid metabolism; C21-steroid hormone metabolism. Functionally, P450 monooxygenase that plays a major role in cholesterol homeostasis in the brain. Primarily catalyzes the hydroxylation (with S stereochemistry) at C-24 of cholesterol side chain, triggering cholesterol diffusion out of neurons and its further degradation. By promoting constant cholesterol elimination in neurons, may activate the mevalonate pathway and coordinate the synthesis of new cholesterol and nonsterol isoprenoids involved in synaptic activity and learning. Further hydroxylates cholesterol derivatives and hormone steroids on both the ring and side chain of these molecules, converting them into active oxysterols involved in lipid signaling and biosynthesis. Acts as an epoxidase converting cholesta-5,24-dien-3beta-ol/desmosterol into (24S),25-epoxycholesterol, an abundant lipid ligand of nuclear NR1H2 and NR1H3 receptors shown to promote neurogenesis in developing brain. May also catalyze the oxidative metabolism of xenobiotics, such as clotrimazole. This chain is Cholesterol 24-hydroxylase, found in Homo sapiens (Human).